Here is a 351-residue protein sequence, read N- to C-terminus: Photosystem II D2 protein (351 aa).

The helical transmembrane segment at 39-59 threads the bilayer; it reads TAYLALGGWFTGTTFVTSWYT. H116 provides a ligand contact to chlorophyll a. The helical transmembrane segment at 123–139 threads the bilayer; sequence GFMLRQFEIARLVGIRP. 2 residues coordinate pheophytin a: Q128 and N141. The chain crosses the membrane as a helical span at residues 151-164; it reads VFLACFLIYPLGQH. H196 contacts chlorophyll a. The helical transmembrane segment at 206–226 threads the bilayer; the sequence is GALLCGIHGATVQNTLFEDGA. 2 residues coordinate a plastoquinone: H213 and F260. Fe cation is bound at residue H213. Residue H267 coordinates Fe cation. Residues 277 to 293 traverse the membrane as a helical segment; it reads GMWTPSVGIVGLAVNLR.

It belongs to the reaction center PufL/M/PsbA/D family. PSII is composed of 1 copy each of membrane proteins PsbA, PsbB, PsbC, PsbD, PsbE, PsbF, PsbH, PsbI, PsbJ, PsbK, PsbL, PsbM, PsbT, PsbX, PsbY, Psb30/Ycf12, peripheral proteins PsbO, CyanoQ (PsbQ), PsbU, PsbV and a large number of cofactors. It forms dimeric complexes. The D1/D2 heterodimer binds P680, chlorophylls that are the primary electron donor of PSII, and subsequent electron acceptors. It shares a non-heme iron and each subunit binds pheophytin, quinone, additional chlorophylls, carotenoids and lipids. There is also a Cl(-1) ion associated with D1 and D2, which is required for oxygen evolution. The PSII complex binds additional chlorophylls, carotenoids and specific lipids. is required as a cofactor.

The protein resides in the cellular thylakoid membrane. The enzyme catalyses 2 a plastoquinone + 4 hnu + 2 H2O = 2 a plastoquinol + O2. Its function is as follows. Photosystem II (PSII) is a light-driven water:plastoquinone oxidoreductase that uses light energy to abstract electrons from H(2)O, generating O(2) and a proton gradient subsequently used for ATP formation. It consists of a core antenna complex that captures photons, and an electron transfer chain that converts photonic excitation into a charge separation. The D1/D2 (PsbA/PsbD) reaction center heterodimer binds P680, the primary electron donor of PSII as well as several subsequent electron acceptors. D2 is needed for assembly of a stable PSII complex. The chain is Photosystem II D2 protein from Prochlorococcus marinus (strain MIT 9313).